Consider the following 303-residue polypeptide: Mevalonate kinase (303 aa).

90–100 (PAGSGLGSSAA) contributes to the ATP binding site. Asp141 (proton acceptor) is an active-site residue.

Belongs to the GHMP kinase family. Mevalonate kinase subfamily. Homodimer. It depends on Mg(2+) as a cofactor.

The protein resides in the cytoplasm. It carries out the reaction (R)-mevalonate + ATP = (R)-5-phosphomevalonate + ADP + H(+). It functions in the pathway isoprenoid biosynthesis; isopentenyl diphosphate biosynthesis via mevalonate pathway; isopentenyl diphosphate from (R)-mevalonate: step 1/3. In terms of biological role, catalyzes the phosphorylation of (R)-mevalonate (MVA) to (R)-mevalonate 5-phosphate (MVAP). Functions in the mevalonate (MVA) pathway leading to isopentenyl diphosphate (IPP), a key precursor for the biosynthesis of isoprenoid compounds such as archaeal membrane lipids. The sequence is that of Mevalonate kinase from Methanothermobacter thermautotrophicus (strain ATCC 29096 / DSM 1053 / JCM 10044 / NBRC 100330 / Delta H) (Methanobacterium thermoautotrophicum).